Consider the following 379-residue polypeptide: Cytochrome b (379 aa).

Transmembrane regions (helical) follow at residues 33–53, 77–98, 113–133, and 178–198; these read FGSL…FLAM, WLIR…FIHV, WNIG…GYVL, and FFAF…VHLL. Positions 83 and 97 each coordinate heme b. Positions 182 and 196 each coordinate heme b. H201 is an a ubiquinone binding site. A run of 4 helical transmembrane segments spans residues 226–246, 288–308, 320–340, and 347–367; these read TKDL…VLFF, LGGV…PLLN, VTQV…WIGG, and FTTI…ILIP.

The protein belongs to the cytochrome b family. As to quaternary structure, the cytochrome bc1 complex contains 11 subunits: 3 respiratory subunits (MT-CYB, CYC1 and UQCRFS1), 2 core proteins (UQCRC1 and UQCRC2) and 6 low-molecular weight proteins (UQCRH/QCR6, UQCRB/QCR7, UQCRQ/QCR8, UQCR10/QCR9, UQCR11/QCR10 and a cleavage product of UQCRFS1). This cytochrome bc1 complex then forms a dimer. Heme b serves as cofactor.

It localises to the mitochondrion inner membrane. Component of the ubiquinol-cytochrome c reductase complex (complex III or cytochrome b-c1 complex) that is part of the mitochondrial respiratory chain. The b-c1 complex mediates electron transfer from ubiquinol to cytochrome c. Contributes to the generation of a proton gradient across the mitochondrial membrane that is then used for ATP synthesis. This Akodon cursor (Cursor grass mouse) protein is Cytochrome b (MT-CYB).